We begin with the raw amino-acid sequence, 225 residues long: ATP-dependent dethiobiotin synthetase BioD (225 aa).

Residue 12 to 17 participates in ATP binding; that stretch reads EIGKTY. Position 16 (Thr-16) interacts with Mg(2+). The active site involves Lys-37. A substrate-binding site is contributed by Ser-41. Residues Asp-55, 122–125, and 182–183 contribute to the ATP site; these read EGVG and SE. Mg(2+)-binding residues include Asp-55 and Glu-122.

Belongs to the dethiobiotin synthetase family. Homodimer. Requires Mg(2+) as cofactor.

The protein resides in the cytoplasm. The catalysed reaction is (7R,8S)-7,8-diammoniononanoate + CO2 + ATP = (4R,5S)-dethiobiotin + ADP + phosphate + 3 H(+). The protein operates within cofactor biosynthesis; biotin biosynthesis; biotin from 7,8-diaminononanoate: step 1/2. Functionally, catalyzes a mechanistically unusual reaction, the ATP-dependent insertion of CO2 between the N7 and N8 nitrogen atoms of 7,8-diaminopelargonic acid (DAPA, also called 7,8-diammoniononanoate) to form a ureido ring. This chain is ATP-dependent dethiobiotin synthetase BioD, found in Methylobacterium nodulans (strain LMG 21967 / CNCM I-2342 / ORS 2060).